Consider the following 1192-residue polypeptide: Probable phospholipid-transporting ATPase IM (1192 aa).

The Cytoplasmic segment spans residues 1–44; it reads MFCSEKKLREVERIVKANDREYNEKFQYADNRIHTSKYNILTFL. The helical transmembrane segment at 45–66 threads the bilayer; sequence PINLFEQFQRVANAYFLCLLIL. Residues 67–72 lie on the Exoplasmic loop side of the membrane; it reads QLIPEI. The helical transmembrane segment at 73 to 92 threads the bilayer; sequence SSLTWFTTIVPLVLVITMTA. At 93–276 the chain is on the cytoplasmic side; that stretch reads VKDATDDYFR…TSIDRLMNTL (184 aa). Residues 277 to 298 form a helical membrane-spanning segment; it reads VLWIFGFLICLGIILAIGNSIW. Topologically, residues 299-327 are exoplasmic loop; sequence ESQTGDQFRTFLFWNEGEKSSVFSGFLTF. Residues 328-349 traverse the membrane as a helical segment; it reads WSYIIILNTVVPISLYVSVEVI. The Cytoplasmic segment spans residues 350-871; that stretch reads RLGHSYFINW…GRWSYFRMCK (522 aa). Asp392 serves as the catalytic 4-aspartylphosphate intermediate. Positions 392, 393, 394, 496, 537, 560, 594, 674, 675, 676, 789, and 795 each coordinate ATP. Asp392 contributes to the Mg(2+) binding site. Mg(2+) is bound at residue Thr394. Asp815 is a binding site for Mg(2+). 2 residues coordinate ATP: Asn818 and Asp819. Asp819 lines the Mg(2+) pocket. The helical transmembrane segment at 872–892 threads the bilayer; it reads FLCYFFYKNFAFTLVHFWFGF. The Exoplasmic loop portion of the chain corresponds to 893–904; sequence FCGFSAQTVYDQ. The chain crosses the membrane as a helical span at residues 905-924; that stretch reads WFITLFNIVYTSLPVLAMGI. Over 925-954 the chain is Cytoplasmic; that stretch reads FDQDVSDQNSVDCPQLYKPGQLNLLFNKRK. Residues 955–976 traverse the membrane as a helical segment; sequence FFICVLHGIYTSLVLFFIPYGA. The Exoplasmic loop portion of the chain corresponds to 977-990; that stretch reads FYNVAGEDGQHIAD. The helical transmembrane segment at 991-1013 threads the bilayer; sequence YQSFAVTMATSLVIVVSVQIALD. At 1014 to 1019 the chain is on the cytoplasmic side; it reads TSYWTF. A helical membrane pass occupies residues 1020–1040; it reads INHVFIWGSIAIYFSILFTMH. The Exoplasmic loop portion of the chain corresponds to 1041-1060; that stretch reads SNGIFGIFPNQFPFVGNARH. Residues 1061–1085 form a helical membrane-spanning segment; sequence SLTQKCIWLVILLTTVASVMPVVAF. Residues 1086–1192 are Cytoplasmic-facing; it reads RFLKVDLYPT…SFSQDKTVKL (107 aa). Positions 1104 to 1125 are enriched in basic residues; the sequence is QKAQKKARPPSSRRPRTRRSSS. Disordered regions lie at residues 1104 to 1130 and 1143 to 1163; these read QKAQ…RSGY and TSGK…EKTH.

It belongs to the cation transport ATPase (P-type) (TC 3.A.3) family. Type IV subfamily. In terms of assembly, component of a P4-ATPase flippase complex which consists of a catalytic alpha subunit and an accessory beta subunit. Interacts with beta subunits TMEM30A and TMEM30B. The cofactor is Mg(2+). Ubiquitously expressed at moderate levels.

The protein resides in the cell membrane. Its subcellular location is the golgi apparatus. The catalysed reaction is ATP + H2O + phospholipidSide 1 = ADP + phosphate + phospholipidSide 2.. Its function is as follows. Component of a P4-ATPase flippase complex which catalyzes the hydrolysis of ATP coupled to the transport of aminophospholipids from the outer to the inner leaflet of various membranes and ensures the maintenance of asymmetric distribution of phospholipids. Phospholipid translocation also seems to be implicated in vesicle formation and in uptake of lipid signaling molecules. The sequence is that of Probable phospholipid-transporting ATPase IM (ATP8B4) from Homo sapiens (Human).